Here is a 124-residue protein sequence, read N- to C-terminus: Holo-[acyl-carrier-protein] synthase (124 aa).

Mg(2+) contacts are provided by D8 and E56.

It belongs to the P-Pant transferase superfamily. AcpS family. Mg(2+) is required as a cofactor.

It localises to the cytoplasm. It catalyses the reaction apo-[ACP] + CoA = holo-[ACP] + adenosine 3',5'-bisphosphate + H(+). Its function is as follows. Transfers the 4'-phosphopantetheine moiety from coenzyme A to a Ser of acyl-carrier-protein. The protein is Holo-[acyl-carrier-protein] synthase of Nitratidesulfovibrio vulgaris (strain ATCC 29579 / DSM 644 / CCUG 34227 / NCIMB 8303 / VKM B-1760 / Hildenborough) (Desulfovibrio vulgaris).